The primary structure comprises 818 residues: Auxin response factor 12 (818 aa).

Over residues 1-10 (MSSSSAASIG) the composition is skewed to low complexity. The disordered stretch occupies residues 1-24 (MSSSSAASIGPPQPPPPPAPPEEE). Pro residues predominate over residues 11 to 20 (PPQPPPPPAP). Residues 135 to 237 (FCKTLTASDT…QLLLGIRRAS (103 aa)) constitute a DNA-binding region (TF-B3). Disordered stretches follow at residues 526–565 (NDQK…FSDP) and 629–648 (GSVL…NKIG). Residues 629 to 640 (GSVLHNSPTSKD) show a composition bias toward polar residues. The 85-residue stretch at 719-803 (RTFVKVYKSG…WYIKILSPED (85 aa)) folds into the PB1 domain.

It belongs to the ARF family. In terms of assembly, homodimers and heterodimers. In terms of tissue distribution, expressed in roots, culms, leaves and young panicles.

It is found in the nucleus. Its function is as follows. Auxin response factors (ARFs) are transcriptional factors that bind specifically to the DNA sequence 5'-TGTCTC-3' found in the auxin-responsive promoter elements (AuxREs). The protein is Auxin response factor 12 (ARF12) of Oryza sativa subsp. japonica (Rice).